We begin with the raw amino-acid sequence, 156 residues long: Arginine repressor (156 aa).

This sequence belongs to the ArgR family.

It localises to the cytoplasm. It participates in amino-acid biosynthesis; L-arginine biosynthesis [regulation]. Its function is as follows. Regulates arginine biosynthesis genes. The polypeptide is Arginine repressor (Klebsiella pneumoniae (strain 342)).